The primary structure comprises 496 residues: Cytochrome P450 71AV8 (496 aa).

A helical transmembrane segment spans residues 3-23 (ISIPTTLGLAVIIFIIFKLLT). Position 432 (cysteine 432) interacts with heme.

The protein belongs to the cytochrome P450 family. Heme is required as a cofactor.

It is found in the membrane. In terms of biological role, valencene oxidase, which preferentially hydroylates the C2 position of (+)-valencene in the trans-orientation, producing trans-nootkatol that can be further oxidized to (+)-nootkatone. Can also catalyze the three-step conversion of germacrene A to germacra-1(10),4,11(13)-trien-12-oic acid and the partial conversion of the non-natural substrate amorpha-4,11-diene into artemisinic alcohol and artemisinic aldehyde. The polypeptide is Cytochrome P450 71AV8 (CYP71AV8) (Cichorium intybus (Chicory)).